A 523-amino-acid chain; its full sequence is Calcium-dependent protein kinase 1 (523 aa).

The interval 1-36 is disordered; the sequence is MGCNQSKSANDVRGNKVNHVNSKKKNNKREDTNDGE. A lipid anchor (N-myristoyl glycine) is attached at Gly2. A lipid anchor (S-palmitoyl cysteine) is attached at Cys3. Residues 57–324 form the Protein kinase domain; that stretch reads YFKVRKLGSG…AEEALNSRWI (268 aa). ATP-binding positions include 63–71, Lys86, and Lys90; that span reads LGSGAYGEV. Residue Ser65 is modified to Phosphoserine. At Ser117 the chain carries Phosphoserine. The active-site Proton acceptor is Asp190. Ser216 and Ser219 each carry phosphoserine. Thr230 is subject to Phosphothreonine. Position 334 is a phosphoserine (Ser334). Positions 345–352 match the J domain autoinhibitory motif motif; sequence NMRKFEGS. Positions 345 to 363 are j domain; it reads NMRKFEGSQKLAQAAILFI. The short motif at 353 to 363 is the J domain interacts with the EF-hand domains element; sequence QKLAQAAILFI. 4 consecutive EF-hand domains span residues 371–406, 415–450, 451–486, and 487–520; these read EERK…LRNF, NVEE…KQIL, FSEE…TSIS, and EKTW…ICDH. The Ca(2+) site is built by Asp384, Asn386, Asp388, Gln390, Glu395, Asp428, Asp430, Asn432, Tyr434, Glu439, Asp464, Asp466, Ser468, Lys470, Glu475, Asp498, Asn500, Asp502, Met504, and Glu509.

Belongs to the protein kinase superfamily. Ser/Thr protein kinase family. CDPK subfamily. Monomer. Mg(2+) is required as a cofactor. Post-translationally, myristoylated. Myristoylation and palmitoylation are required for the localization to the parasitophorous vacuole membrane. Palmitoylated. Palmitoylation increases in merozoites in response to low level of extracellular K(+) in the host blood. Myristoylation and palmitoylation are required for the localization to the parasitophorous vacuole membrane. In terms of processing, phosphorylation at Thr-230 may regulate CDPK1 kinase activity. Phosphorylation increases in response to an increase in intracellular Ca(2+) levels. Autophosphorylated in vitro. Autophosphorylation does not affect membrane localization in vitro.

It localises to the membrane. The protein localises to the cell membrane. Its subcellular location is the parasitophorous vacuole membrane. The protein resides in the cytoplasm. It is found in the cell projection. It localises to the cilium. The protein localises to the flagellum. Its subcellular location is the host cell membrane. The catalysed reaction is L-seryl-[protein] + ATP = O-phospho-L-seryl-[protein] + ADP + H(+). It catalyses the reaction L-threonyl-[protein] + ATP = O-phospho-L-threonyl-[protein] + ADP + H(+). Its activity is regulated as follows. Activated by calcium. Upon calcium binding to the EF-hand domains, the C-terminus of the junction domain (J domain) undergoes a conformational change which results in the dissociation of the pseudo-substrate inhibitory motif from the catalytic domain. This, in turn may facilitate the autophosphorylation of the activation loop at Thr-230, which leads to the kinase activation. In terms of biological role, calcium-dependent protein kinase which acts as a sensor and effector of intracellular Ca(2+) levels probably in part downstream of cGMP-activated PKG kinase. During the liver stage, involved in sporozoite motility and thus in sporozoite invasion of host hepatocytes, probably together with CDPK4 and CDPK5. In the mosquito midgut and during the last stage of male gamete exflagellation, may play a role in the rupture of the host erythrocyte membrane. In the mosquito midgut, required for the differentiation of the zygote into the ookinete by promoting the translational activation of a subset of repressed mRNAs; these mRNAs are kept repressed in the zygote by the DOZI- or CITH-containing mRNP complexes. Dispensable during the asexual blood stage. The sequence is that of Calcium-dependent protein kinase 1 from Plasmodium berghei (strain Anka).